The primary structure comprises 233 residues: Large ribosomal subunit protein uL1 (233 aa).

The protein belongs to the universal ribosomal protein uL1 family. As to quaternary structure, part of the 50S ribosomal subunit.

In terms of biological role, binds directly to 23S rRNA. The L1 stalk is quite mobile in the ribosome, and is involved in E site tRNA release. Its function is as follows. Protein L1 is also a translational repressor protein, it controls the translation of the L11 operon by binding to its mRNA. This chain is Large ribosomal subunit protein uL1, found in Geotalea uraniireducens (strain Rf4) (Geobacter uraniireducens).